Reading from the N-terminus, the 451-residue chain is MLEAPSYLVSRDLPSSCEEESKWIYNAHCVLQLSLRKRLLDDTDVEGSSAKKMLRVDHGSRGESDKITDSLQLAKTYQSSNQSQQGGGGDQQSSPVTRLDQNALLNCLAHCSLSDFGSIASTNRTFRSLIKDSELYRLRRAKGIVEHWIYFSCRLLEWEAYDPNGDRWLRVPKMTFNECFMCSDKESLAVGTELLVFGKEIMSHVIYRYSILTNTWTSGMQMNVPRCLFGSASLGEIAVIAGGCDPRGRILSSAELYNSETGEWTVIPSMNKARKMCSSVFMDGNFYCIGGIGEGNSKMLLCGEVYDLKKKTWTLIPNMLPERSSGGGGDQAKEIAAATAASEAPPLVAVVKDELYAANYAQQEVKKYDKRLNVWNKVGNLPERASSMNGWGMAFRACGDQLVVVGGPRAIGGGFIEINACVPSEGTQLHWRVLASKPSGNFVYNCAVMGC.

The F-box domain maps to 93–139 (SSPVTRLDQNALLNCLAHCSLSDFGSIASTNRTFRSLIKDSELYRLR). Kelch repeat units lie at residues 137–188 (RLRR…KESL), 193–236 (ELLV…SLGE), 237–284 (IAVI…FMDG), 286–333 (FYCI…DQAK), and 349–395 (AVVK…GMAF).

This Arabidopsis thaliana (Mouse-ear cress) protein is F-box/kelch-repeat protein At1g74510.